Reading from the N-terminus, the 329-residue chain is Acetyl-coenzyme A carboxylase carboxyl transferase subunit alpha (329 aa).

The CoA carboxyltransferase C-terminal domain occupies 40–294 (QLETLAARRR…REAIERHLDD (255 aa)).

It belongs to the AccA family. Acetyl-CoA carboxylase is a heterohexamer composed of biotin carboxyl carrier protein (AccB), biotin carboxylase (AccC) and two subunits each of ACCase subunit alpha (AccA) and ACCase subunit beta (AccD).

Its subcellular location is the cytoplasm. The catalysed reaction is N(6)-carboxybiotinyl-L-lysyl-[protein] + acetyl-CoA = N(6)-biotinyl-L-lysyl-[protein] + malonyl-CoA. It participates in lipid metabolism; malonyl-CoA biosynthesis; malonyl-CoA from acetyl-CoA: step 1/1. Its function is as follows. Component of the acetyl coenzyme A carboxylase (ACC) complex. First, biotin carboxylase catalyzes the carboxylation of biotin on its carrier protein (BCCP) and then the CO(2) group is transferred by the carboxyltransferase to acetyl-CoA to form malonyl-CoA. The sequence is that of Acetyl-coenzyme A carboxylase carboxyl transferase subunit alpha from Prochlorococcus marinus (strain MIT 9303).